The chain runs to 618 residues: Beta-xylosidase (618 aa).

Disordered regions lie at residues 76–100 (ERDRYTTDESDSGSSERHSVQQEES) and 463–509 (LEPQ…PPIQ).

It belongs to the glycosyl hydrolase 52 family.

Its subcellular location is the secreted. It catalyses the reaction Hydrolysis of (1-&gt;4)-beta-D-xylans, to remove successive D-xylose residues from the non-reducing termini.. The protein operates within glycan degradation; xylan degradation. This is Beta-xylosidase (xylA) from Geobacillus stearothermophilus (Bacillus stearothermophilus).